The primary structure comprises 661 residues: DnaJ protein ERDJ2B (661 aa).

Residues 1-8 (MAESEENS) are Lumenal-facing. The chain crosses the membrane as a helical span at residues 9-29 (VLFPIFILTMMAIPLVPYTFV). Topologically, residues 30-65 (KLSRAFSKKQRSIHCQCLECDRSGKYKRSISQSISS) are cytoplasmic. The chain crosses the membrane as a helical span at residues 66–86 (FTSCSNLTVVLLWIVMIFLIY). Residues 87–190 (HTKNMSRESQ…FILNMNGESG (104 aa)) lie on the Lumenal side of the membrane. Asn-90 carries N-linked (GlcNAc...) asparagine glycosylation. Positions 99–164 (EPFGILGLEP…LSRENFEKYG (66 aa)) constitute a J domain. Residues 191-211 (GILLLCTVGLCILLPLVIASI) traverse the membrane as a helical segment. Residues 206–597 (LVIASIYLWR…IGCDQKTSLK (392 aa)) form the SEC63 domain. The Cytoplasmic portion of the chain corresponds to 212–661 (YLWRSSKYTG…SSEESGSDEE (450 aa)). The disordered stretch occupies residues 608–661 (EGENAEEGLEEEDDEIEEEDYESEYSEDEEDKKRGSKKKVNKESSSEESGSDEE). A compositionally biased stretch (acidic residues) spans 609 to 637 (GENAEEGLEEEDDEIEEEDYESEYSEDEE).

As to quaternary structure, interacts with OEP61/TPR7. As to expression, expressed in leaves, flower buds and flowers.

The protein localises to the endoplasmic reticulum membrane. Its function is as follows. Required for integral membrane and secreted preprotein translocation across the endoplasmic reticulum membrane. This is DnaJ protein ERDJ2B (ERDJ2B) from Arabidopsis thaliana (Mouse-ear cress).